Consider the following 223-residue polypeptide: Thiamine-phosphate synthase (223 aa).

4-amino-2-methyl-5-(diphosphooxymethyl)pyrimidine-binding positions include 47–51 and Asn-84; that span reads QLRDK. Residues Asp-85 and Asp-104 each coordinate Mg(2+). Residue Ser-123 coordinates 4-amino-2-methyl-5-(diphosphooxymethyl)pyrimidine. 2-[(2R,5Z)-2-carboxy-4-methylthiazol-5(2H)-ylidene]ethyl phosphate is bound at residue 150–152; the sequence is TPT. A 4-amino-2-methyl-5-(diphosphooxymethyl)pyrimidine-binding site is contributed by Lys-153. Residue Gly-182 coordinates 2-[(2R,5Z)-2-carboxy-4-methylthiazol-5(2H)-ylidene]ethyl phosphate.

Belongs to the thiamine-phosphate synthase family. It depends on Mg(2+) as a cofactor.

It carries out the reaction 2-[(2R,5Z)-2-carboxy-4-methylthiazol-5(2H)-ylidene]ethyl phosphate + 4-amino-2-methyl-5-(diphosphooxymethyl)pyrimidine + 2 H(+) = thiamine phosphate + CO2 + diphosphate. The catalysed reaction is 2-(2-carboxy-4-methylthiazol-5-yl)ethyl phosphate + 4-amino-2-methyl-5-(diphosphooxymethyl)pyrimidine + 2 H(+) = thiamine phosphate + CO2 + diphosphate. It catalyses the reaction 4-methyl-5-(2-phosphooxyethyl)-thiazole + 4-amino-2-methyl-5-(diphosphooxymethyl)pyrimidine + H(+) = thiamine phosphate + diphosphate. The protein operates within cofactor biosynthesis; thiamine diphosphate biosynthesis; thiamine phosphate from 4-amino-2-methyl-5-diphosphomethylpyrimidine and 4-methyl-5-(2-phosphoethyl)-thiazole: step 1/1. Condenses 4-methyl-5-(beta-hydroxyethyl)thiazole monophosphate (THZ-P) and 2-methyl-4-amino-5-hydroxymethyl pyrimidine pyrophosphate (HMP-PP) to form thiamine monophosphate (TMP). This chain is Thiamine-phosphate synthase, found in Saccharopolyspora erythraea (strain ATCC 11635 / DSM 40517 / JCM 4748 / NBRC 13426 / NCIMB 8594 / NRRL 2338).